The sequence spans 234 residues: 1-(5-phosphoribosyl)-5-[(5-phosphoribosylamino)methylideneamino] imidazole-4-carboxamide isomerase (234 aa).

D8 serves as the catalytic Proton acceptor. The active-site Proton donor is the D128.

It belongs to the HisA/HisF family.

The protein localises to the cytoplasm. The enzyme catalyses 1-(5-phospho-beta-D-ribosyl)-5-[(5-phospho-beta-D-ribosylamino)methylideneamino]imidazole-4-carboxamide = 5-[(5-phospho-1-deoxy-D-ribulos-1-ylimino)methylamino]-1-(5-phospho-beta-D-ribosyl)imidazole-4-carboxamide. Its pathway is amino-acid biosynthesis; L-histidine biosynthesis; L-histidine from 5-phospho-alpha-D-ribose 1-diphosphate: step 4/9. This Cenarchaeum symbiosum (strain A) protein is 1-(5-phosphoribosyl)-5-[(5-phosphoribosylamino)methylideneamino] imidazole-4-carboxamide isomerase.